The chain runs to 594 residues: MRSLLSFVLLALARIAISEETKSCIDIEKGFKEEFNAHKQPVCICADNGIFSTVKGFTIECESASIASVSENLASLNGTELGRLTIRDSTVNVLPQDLFENVFAKQVKLERCGLSTLQPNSFQSLGGSAELLSLRENRIKKLEKGLFTGLKSLKTLDLAMNKIQEIDVGAFEELKKVEELLLNENDIRVLKTGTFDGMKNLKKLTLQNCNLEIIQKGAFRGLNSLEQLILSNNNLENIDWTIFSALKNLRVLDLGSNKISNVEMKSFPKLEKLVLNNNTIDSMKSIKLKDLPSLVVALFDRNKIESIGDMDMFGLTRSDRIETLSLARNNLSQISPKAFQHTPNLITLLLQYNQIEELSSHSPSQVRTPFLASLKKLVTLQLSSNNLSVIRSDELPKSLSSLALDHNVISKIEARALEGMEIKRLYLHSNKLNYLYQGTFDSFSPKSVEAVDVSLNPWVCVCNDPKEWLPRWLEASEEADVAEGALGCLAIPNCGQKEGSTVMPEEEEVYRSGWITVAATILTIVTIVIMVIIAMLYFKDARYQFPLRGRRSDSDLHKLIENDPLNIASDSILVVPAMPKRNTGPKKTVRFQNF.

The signal sequence occupies residues 1–18 (MRSLLSFVLLALARIAIS). At 19-513 (EETKSCIDIE…PEEEEVYRSG (495 aa)) the chain is on the extracellular side. 15 LRR repeats span residues 78–101 (GTEL…LFEN), 103–124 (FAKQ…SFQS), 125–149 (LGGS…LFTG), 150–173 (LKSL…AFEE), 175–197 (KKVE…TFDG), 198–221 (MKNL…AFRG), 222–245 (LNSL…IFSA), 246–269 (LKNL…SFPK), 271–290 (EKLV…KLKD), 291–315 (LPSL…MFGL), 318–341 (SDRI…AFQH), 343–365 (PNLI…SPSQ), 374–397 (LKKL…ELPK), 399–419 (LSSL…ALEG), and 420–442 (MEIK…TFDS). A helical membrane pass occupies residues 514 to 534 (WITVAATILTIVTIVIMVIIA). Residues 535–594 (MLYFKDARYQFPLRGRRSDSDLHKLIENDPLNIASDSILVVPAMPKRNTGPKKTVRFQNF) are Cytoplasmic-facing.

Interacts with glh-1. Interacts (via LRR regions) with myrf-1 (via C-terminus); the interaction promotes the role of myrf-1 in the synaptic remodeling of DD GABAergic motor neurons at the cell membrane. As to expression, expressed in the germline and somatic cells. Expressed in the germline and somatic cells. Expressed at higher levels in germline cells relative to somatic cells. In terms of tissue distribution, expressed in germline cells. As to expression, highly expressed in the pharynx and at lower levels in the intestine, but not detected in other tissues. Other studies suggest a broader expression pattern in somatic tissues: from embryogenesis to adult stages, expressed strongly in body wall muscle, vulva, somatic gonad and pharynx, at lower levels in the nerve ring, hypodermis, and rectal epithelia, and very weakly in the intestine.

The protein resides in the cytoplasm. It is found in the apical cell membrane. Its function is as follows. Regulates diverse developmental processes including larval molting and gonad maturation. Functionally, promotes the localization of myrf-1 and myrf-2 to the cell membrane. In association with myrf-1, promotes the synaptic remodeling of DD GABAergic motor neurons whereby new synapses form in the dorsal processes of DD neurons. The polypeptide is P-granule-associated novel protein 1 (Caenorhabditis elegans).